Reading from the N-terminus, the 224-residue chain is Orotate phosphoribosyltransferase (224 aa).

Residues lysine 26, 73-74 (YK), arginine 100, lysine 101, lysine 104, histidine 106, and 127-135 (EDVTTAGTS) each bind 5-phospho-alpha-D-ribose 1-diphosphate. Positions 131 and 160 each coordinate orotate.

Belongs to the purine/pyrimidine phosphoribosyltransferase family. PyrE subfamily. In terms of assembly, homodimer. It depends on Mg(2+) as a cofactor.

The enzyme catalyses orotidine 5'-phosphate + diphosphate = orotate + 5-phospho-alpha-D-ribose 1-diphosphate. It functions in the pathway pyrimidine metabolism; UMP biosynthesis via de novo pathway; UMP from orotate: step 1/2. Functionally, catalyzes the transfer of a ribosyl phosphate group from 5-phosphoribose 1-diphosphate to orotate, leading to the formation of orotidine monophosphate (OMP). The polypeptide is Orotate phosphoribosyltransferase (Clostridium beijerinckii (strain ATCC 51743 / NCIMB 8052) (Clostridium acetobutylicum)).